Consider the following 101-residue polypeptide: Small ribosomal subunit protein uS14 (101 aa).

This sequence belongs to the universal ribosomal protein uS14 family. As to quaternary structure, part of the 30S ribosomal subunit. Contacts proteins S3 and S10.

Binds 16S rRNA, required for the assembly of 30S particles and may also be responsible for determining the conformation of the 16S rRNA at the A site. The sequence is that of Small ribosomal subunit protein uS14 from Shewanella piezotolerans (strain WP3 / JCM 13877).